We begin with the raw amino-acid sequence, 225 residues long: O-methyltransferase rstn1 (225 aa).

Residues Gln97 and His142 each coordinate S-adenosyl-L-methionine.

Belongs to the methyltransferase superfamily.

The catalysed reaction is desmethylrestrictinol + S-adenosyl-L-methionine = restrictinol + S-adenosyl-L-homocysteine + H(+). It participates in antifungal biosynthesis. O-methyltransferase; part of the gene cluster that mediates the biosynthesis of the tetrahydropyranyl antifungal agent restricticin that acts as an inhibitor of CYP51 and blocks the ergosterol biosynthesis. Within the pathway, rstn1 uses S-adenosylmethionine to methylate position C4 of desmethylrestrictinol to produce restrictinol. The highly reducing polyketide synthase rstn3, the short chain dehydrogenase rstn4, the cyclase rstn5, the FAD-dependent monooxygenase rstn6 and the enoylreductase rstn7 are required to generate the first stable intermediate desmethylrestrictinol. Rstn3 with rstn7 biosynthesize the first polyketide chain intermediate that is reduced by rstn4, followed by epoxidation by rstn6 before 6-endo cyclization via epoxide opening by rstn5 leads to desmethylrestrictinol. The methyltransferase rstn1 then catalyzes the C4 O-methylation of desmethylrestrictinol to produce restrictinol, and the nonribosomal peptide synthetase rstn8 catalyzes the C3 esterification of restrictinol with glycine that leads to restricticin. This chain is O-methyltransferase rstn1, found in Aspergillus nomiae NRRL (strain ATCC 15546 / NRRL 13137 / CBS 260.88 / M93).